The primary structure comprises 396 residues: MAKSKFERVKPHINVGTIGHVDHGKTTLTAAITTILTRKFGGEAKSYAQIDSAPEERARGITINTSHVEYETDKRHYAHVDCPGHADYVKNMITGAAQMDGAILVVSAADGPMPQTREHILLARQVGVPYIIVFMNKADMVDDAELLELVEMEIRELLSKYDFPGDDTPIIIGSALKALEGDKGDIGEAAILKLAEVLDSYIPEPQRAIDGAFIMPVEDVFSISGRGTVVTGRVERGIVKVGDEIEIVGLRPTIKTTCTGVEMFRKLLDQGQAGDNVGILLRGTKREEVERGQVLAKPGSILPHTKFSAEIYVLSKEEGGRHTPFFAGYRPQFYFRTTDVTGSIELPAGVEMVMPGDNISVNVNLIAPIAMSDGLRFAIREGGRTVGAGVVAKVIE.

The region spanning 10-206 (KPHINVGTIG…VLDSYIPEPQ (197 aa)) is the tr-type G domain. The G1 stretch occupies residues 19–26 (GHVDHGKT). 19 to 26 (GHVDHGKT) contributes to the GTP binding site. Threonine 26 lines the Mg(2+) pocket. A G2 region spans residues 60-64 (GITIN). The interval 81–84 (DCPG) is G3. Residues 81 to 85 (DCPGH) and 136 to 139 (NKAD) contribute to the GTP site. A G4 region spans residues 136–139 (NKAD). The tract at residues 174–176 (SAL) is G5.

It belongs to the TRAFAC class translation factor GTPase superfamily. Classic translation factor GTPase family. EF-Tu/EF-1A subfamily. As to quaternary structure, monomer.

The protein resides in the cytoplasm. The enzyme catalyses GTP + H2O = GDP + phosphate + H(+). In terms of biological role, GTP hydrolase that promotes the GTP-dependent binding of aminoacyl-tRNA to the A-site of ribosomes during protein biosynthesis. This chain is Elongation factor Tu 2, found in Nitrosomonas eutropha (strain DSM 101675 / C91 / Nm57).